The following is an 82-amino-acid chain: Small ribosomal subunit protein bTHXm (82 aa).

The transit peptide at 1-22 directs the protein to the mitochondrion; sequence MAMRLAAAAAFVRRLVPARNPV. The disordered stretch occupies residues 34 to 56; sequence RGDKKTKRGKRFKGSYGNARPKR. Positions 37–46 are enriched in basic residues; the sequence is KKTKRGKRFK.

The protein belongs to the bacterial ribosomal protein bTHX family.

It is found in the mitochondrion. The polypeptide is Small ribosomal subunit protein bTHXm (Oryza sativa subsp. japonica (Rice)).